A 548-amino-acid polypeptide reads, in one-letter code: Probable aquaglyceroporin-4 (548 aa).

The span at 1–22 (MAGTQDQSQDYFSKPTTPSTPG) shows a compositional bias: polar residues. 3 disordered regions span residues 1–63 (MAGT…LPST), 76–101 (SRGFSRVSSEGTASRPTAPQHSSHFH), and 158–270 (KEET…ESGD). Residues 1 to 290 (MAGTQDQSQD…ARLRARHPEP (290 aa)) are Cytoplasmic-facing. The segment covering 38 to 48 (PDRESGTERAK) has biased composition (basic and acidic residues). Composition is skewed to polar residues over residues 77-97 (RGFSRVSSEGTASRPTAPQHS) and 171-200 (SRTTSGQPYRVETQSSLPSRDIQRQQSRTT). Residues 249–265 (PDFKVDGEPLGHQEKPC) show a composition bias toward basic and acidic residues. The helical transmembrane segment at 291–311 (LAEFLATAVAIFLGLTGTLSV) threads the bilayer. Asparagine 312 carries N-linked (GlcNAc...) asparagine glycosylation. Topologically, residues 312–327 (NLSATQSQPYGTYETS) are extracellular. The helical transmembrane segment at 328-348 (CWAWGFAWMFGIYLGGGVSGA) threads the bilayer. The Cytoplasmic portion of the chain corresponds to 349–369 (HMNPAISVSLSIFRGFPWRQC). The NPA 1 signature appears at 351 to 353 (NPA). A helical membrane pass occupies residues 370–390 (VIYVFVQFIASIVAGALAYAM). Over 391 to 420 (YADSINHVDPDMTKMSMTFFSTPREWVTLK) the chain is Extracellular. The chain crosses the membrane as a helical span at residues 421–441 (SAFFNQVVGSAIMMIAVFALG). Topologically, residues 442–448 (DDQNNPP) are cytoplasmic. A helical transmembrane segment spans residues 449 to 469 (GAGMHALVLGFLVTTLKFTLG). The Extracellular segment spans residues 470–508 (YNIGSALNPASDFGPRVIAYAVGFRGDNVFHSGWWFYGP). Positions 477 to 479 (NPA) match the NPA 2 motif. The helical transmembrane segment at 509–529 (WAATLIGSLLGCTLYDGFVFV) threads the bilayer. The Cytoplasmic segment spans residues 530-548 (GSESPVNFRVDKRVKKLFN).

The protein belongs to the MIP/aquaporin (TC 1.A.8) family.

The protein resides in the membrane. It catalyses the reaction H2O(in) = H2O(out). The catalysed reaction is glycerol(in) = glycerol(out). Functionally, probable water/glycerol channel that may have redundant functions with FgAQP2. The chain is Probable aquaglyceroporin-4 from Gibberella zeae (strain ATCC MYA-4620 / CBS 123657 / FGSC 9075 / NRRL 31084 / PH-1) (Wheat head blight fungus).